The primary structure comprises 155 residues: Ciliary microtubule inner protein 2C (155 aa).

The protein belongs to the CIMIP2 family.

The protein localises to the cytoplasm. It localises to the cytoskeleton. Its subcellular location is the cilium axoneme. Functionally, microtubule inner protein (MIP) part of the dynein-decorated doublet microtubules (DMTs) in cilia axoneme, which is required for motile cilia beating. This Xenopus laevis (African clawed frog) protein is Ciliary microtubule inner protein 2C (cimip2ca).